A 346-amino-acid chain; its full sequence is Putative D-threonate 4-phosphate dehydrogenase (346 aa).

Residues His141 and Thr142 each contribute to the substrate site. A divalent metal cation-binding residues include His171, His215, and His270. Positions 278 and 296 each coordinate substrate.

The protein belongs to the PdxA family. PdxA2 subfamily. In terms of assembly, homodimer. A divalent metal cation is required as a cofactor.

The catalysed reaction is 4-O-phospho-D-threonate + NAD(+) = dihydroxyacetone phosphate + CO2 + NADH. Catalyzes the NAD-dependent oxidation and subsequent decarboxylation of D-threonate 4-phosphate to produce dihydroxyacetone phosphate (DHAP). This chain is Putative D-threonate 4-phosphate dehydrogenase, found in Cutibacterium acnes (strain DSM 16379 / KPA171202) (Propionibacterium acnes).